Reading from the N-terminus, the 243-residue chain is Juxtaposed with another zinc finger protein 1 (243 aa).

The C2H2-type 1 zinc-finger motif lies at 12-37 (NTCRFGGCGLHFPTLADLIEHIEDNH). A required for interaction with NR2C2 region spans residues 39–79 (DTDPRVLEKQELQQPTYVALSYINRFMTDAARREQESLKKK). The segment covering 89 to 108 (SSSVSRGNVSTPPRHSSGSL) has biased composition (polar residues). The segment at 89-151 (SSSVSRGNVS…SDSDESWTTE (63 aa)) is disordered. Phosphothreonine is present on residues Thr109 and Thr113. A compositionally biased stretch (low complexity) spans 118–130 (PSSSFRSSTPTGS). The span at 131 to 148 (EYDEEEVDYEESDSDESW) shows a compositional bias: acidic residues. The C2H2-type 2 zinc finger occupies 173–198 (FACPVPGCKKRYKNVNGIKYHAKNGH). The segment at 208–230 (FKCRCGKSYKTAQGLRHHTINFH) adopts a C2H2-type 3; degenerate zinc-finger fold.

In terms of assembly, interacts with NR2C2 (via ligand-binding region). In terms of tissue distribution, highest expression in testis with moderate levels in colon, placenta, prostate and ovary and low levels in brain, spleen, liver and small intestine.

Its subcellular location is the nucleus. In terms of biological role, acts as a transcriptional corepressor of orphan nuclear receptor NR2C2. Inhibits expression of the gluconeogenesis enzyme PCK2 through inhibition of NR2C2 activity. Also involved in transcriptional activation of NAMPT by promoting expression of PPARA and PPARD. Plays a role in lipid metabolism by suppressing lipogenesis, increasing lipolysis and decreasing lipid accumulation in adipose tissue. Plays a role in glucose homeostasis by improving glucose metabolism and insulin sensitivity. This chain is Juxtaposed with another zinc finger protein 1, found in Homo sapiens (Human).